Reading from the N-terminus, the 341-residue chain is MKFLDQAKVYIRSGNGGAGAVSFRREKFIEFGGPDGGDGGRGGDVWALVVDGLNTLIDYRYQQHFRAKTGGHGKGRNMTGEKGNDIILKVPVGTQIFEEDNTTLICDLTEVGQRYRLAKGGNGGFGNLHFMNSTNQAPRRANPGLVGEERTLWLRLKLIADAGLIGLPNAGKSTFLASVTAAKPKVADYPFTTLYPHLGVARIDAREFVLADIPGLIEGAHEGVGLGDRFLGHIERCCVLFHLISAQEEDVAKAYQIVRNELKAYGNNLSDKTEIVAISQIDTLTLEERKVKQEVLQRVTGKSVMMFSAVSGESLEAMLRAGAHMIEMVRKEGVDRDVRTD.

In terms of domain architecture, Obg spans 1–159; the sequence is MKFLDQAKVY…RTLWLRLKLI (159 aa). The OBG-type G domain maps to 160–327; that stretch reads ADAGLIGLPN…MLRAGAHMIE (168 aa). Residues 166 to 173, 191 to 195, 212 to 215, 279 to 282, and 308 to 310 contribute to the GTP site; these read GLPNAGKS, FTTLY, DIPG, SQID, and SAV. Mg(2+)-binding residues include Ser173 and Thr193.

This sequence belongs to the TRAFAC class OBG-HflX-like GTPase superfamily. OBG GTPase family. In terms of assembly, monomer. Mg(2+) is required as a cofactor.

The protein resides in the cytoplasm. Functionally, an essential GTPase which binds GTP, GDP and possibly (p)ppGpp with moderate affinity, with high nucleotide exchange rates and a fairly low GTP hydrolysis rate. Plays a role in control of the cell cycle, stress response, ribosome biogenesis and in those bacteria that undergo differentiation, in morphogenesis control. This Bartonella quintana (strain Toulouse) (Rochalimaea quintana) protein is GTPase Obg.